Consider the following 618-residue polypeptide: Protein polyglycylase TTLL10 (618 aa).

Residues 1 to 76 form a disordered region; the sequence is MGSSQEEGLP…GLLLGDGKPS (76 aa). Residues 57–74 are compositionally biased toward low complexity; that stretch reads ATGPPAALLEGLLLGDGK. A TTL domain is found at 82 to 479; sequence PGPFFYIGGN…TFQKSLRGQK (398 aa). ATP is bound by residues lysine 240, 246-247, 289-292, 302-304, and 345-346; these read QG, QRYI, KFD, and TN. Glutamine 246 provides a ligand contact to a protein. Mg(2+)-binding residues include aspartate 425, glutamate 438, and asparagine 440. Residues 503–618 are disordered; that stretch reads LGGSCSLRRR…PATLPAFRDL (116 aa). Positions 539–557 are enriched in pro residues; it reads PVPPPLAPQRPQLPGPSPD. The span at 585–594 shows a compositional bias: basic and acidic residues; that stretch reads AKEEREEPEN.

Mg(2+) serves as cofactor.

Its subcellular location is the cytoplasm. It is found in the cytoskeleton. It localises to the cell projection. The protein localises to the cilium. The protein resides in the cilium axoneme. It catalyses the reaction (glycyl)(n)-glycyl-L-glutamyl-[protein] + glycine + ATP = (glycyl)(n+1)-glycyl-L-glutamyl-[protein] + ADP + phosphate + H(+). Its function is as follows. Polyglycylase which modifies both tubulin and non-tubulin proteins, generating polyglycine side chains of variable lengths on the gamma-carboxyl groups of specific glutamate residues of target proteins. Involved in the elongation step rather than the initiation step of the polyglycylation reaction. Polyglycylates alpha-tubulin and beta-tubulin. Polyglycylates non-tubulin proteins such as nucleosome assembly protein NAP1. This is Protein polyglycylase TTLL10 (TTLL10) from Macaca fascicularis (Crab-eating macaque).